Here is a 545-residue protein sequence, read N- to C-terminus: Chaperonin GroEL (545 aa).

Residues 29–32, 86–90, glycine 413, 476–478, and aspartate 492 each bind ATP; these read TLGP, DGTTT, and NAA.

The protein belongs to the chaperonin (HSP60) family. Forms a cylinder of 14 subunits composed of two heptameric rings stacked back-to-back. Interacts with the co-chaperonin GroES.

The protein localises to the cytoplasm. It catalyses the reaction ATP + H2O + a folded polypeptide = ADP + phosphate + an unfolded polypeptide.. Together with its co-chaperonin GroES, plays an essential role in assisting protein folding. The GroEL-GroES system forms a nano-cage that allows encapsulation of the non-native substrate proteins and provides a physical environment optimized to promote and accelerate protein folding. This is Chaperonin GroEL from Oceanobacillus iheyensis (strain DSM 14371 / CIP 107618 / JCM 11309 / KCTC 3954 / HTE831).